We begin with the raw amino-acid sequence, 500 residues long: Cytochrome P450 2D4 (500 aa).

Residue cysteine 446 coordinates heme.

It belongs to the cytochrome P450 family. The cofactor is heme. As to expression, brain.

It localises to the endoplasmic reticulum membrane. The protein resides in the microsome membrane. The catalysed reaction is an organic molecule + reduced [NADPH--hemoprotein reductase] + O2 = an alcohol + oxidized [NADPH--hemoprotein reductase] + H2O + H(+). Functionally, cytochromes P450 are a group of heme-thiolate monooxygenases. In liver microsomes, this enzyme is involved in an NADPH-dependent electron transport pathway. It oxidizes a variety of structurally unrelated compounds, including steroids, fatty acids, and xenobiotics. The protein is Cytochrome P450 2D4 (Cyp2d4) of Rattus norvegicus (Rat).